Consider the following 617-residue polypeptide: Erythritol-mannosyl-transferase 1 (617 aa).

2 disordered regions span residues 365-396 and 567-617; these read RNPGSPGFTSPLNSPTAVATPKWDEKRPIDSR and RQRK…VTNP. The segment covering 371–381 has biased composition (polar residues); it reads GFTSPLNSPTA. The span at 386–396 shows a compositional bias: basic and acidic residues; sequence KWDEKRPIDSR. Residues 578–603 show a composition bias toward polar residues; the sequence is TAKTSLSVDTTEVATPTFTDTETSLS.

Belongs to the UDP-glycosyltransferase family.

It participates in secondary metabolite biosynthesis. Glycosyltransferase; part of the gene cluster that mediates the biosynthesis of mannosylerythritol lipids (MELs), surface-active substances that enhance the availability of water-insoluble substrates. Depending on the number of acetyl groups, mannosylerythritol lipids can be differentiated into MEL A (fully acetylated), MEL B and MEL C (monoacetylated at R-6 and R-4, respectively), and the fully deacetylated MEL D. The first step in the pathway is the generation of mannosylerythritol by the glycosyltransferase EMT1 which catalyzes the transfer of GDP-mannose to the C-4 atom of meso-erythritol. This reaction has to be stereospecific, since only mannosyl-D-erythritol is generated. The produced disaccharide is subsequently acylated with fatty acids of various lengths by the acyltransferases MAC1 and MAC2 at positions C-2 and C-3, repectively. The existence of MEL derivatives which carry an acetyl group at C-2 implies that at least MAC1 also accepts acetyl-CoA as a donor. The final step of MEL biosynthesis is the acetylation of the fully acylated mannosylerythritol lipids catalyzed by the acetyl-CoA-dependent acetyltransferase MAT1. MAT1 displays a relaxed regioselectivity and is able to transfer acetylgroups to both positions C-4 and C-6 of the mannosyl moiety. The protein is Erythritol-mannosyl-transferase 1 of Pseudozyma antarctica (strain T-34) (Yeast).